The primary structure comprises 114 residues: Endoribonuclease MazF2 (114 aa).

This sequence belongs to the PemK/MazF family. Probably forms a complex with cognate antitoxin MazE2.

Functionally, toxic component of a type II toxin-antitoxin (TA) system. Acts as an endoribonuclease on single-strand RNA, cleaving between the second and third bases in the sequences CUCCU and UUCCU. Neutralized by coexpression with cognate antitoxin MazE2. This chain is Endoribonuclease MazF2 (mazF2), found in Mycobacterium bovis (strain ATCC BAA-935 / AF2122/97).